A 154-amino-acid chain; its full sequence is Protein disulfide-isomerase LQY1, chloroplastic (154 aa).

Residues 1–43 constitute a chloroplast transit peptide; the sequence is MPVSAPSPPRLHSPFIHCPINFTPSSFSARNLRSPSTSYPRIK. Residues 51–71 traverse the membrane as a helical segment; sequence VVAISVGVASVALGIGIPVFY. The CR-type zinc finger occupies 77 to 147; that stretch reads NAAKRENTQP…SGVQPRYLDR (71 aa). Residues C87, C90, C98, C101, C121, C124, C132, and C135 each coordinate Zn(2+).

This sequence belongs to the BSD2 chaperone family. In terms of assembly, interacts with the photosystem II core subunits. Interacts with HHL1. Requires Zn(2+) as cofactor.

The protein localises to the plastid. The protein resides in the chloroplast thylakoid membrane. It carries out the reaction Catalyzes the rearrangement of -S-S- bonds in proteins.. In terms of biological role, protein disulfide-isomerase probably involved upon formation of a complex with HHL1 in maintaining photosystem II (PSII) activity under high light by regulating repair and reassembly of PSII complexes. This is Protein disulfide-isomerase LQY1, chloroplastic from Arabidopsis thaliana (Mouse-ear cress).